The primary structure comprises 2944 residues: Collagen alpha-1(VII) chain (2944 aa).

The signal sequence occupies residues 1–16 (MTLRLLVAALCAGILA). A nonhelical region (NC1) region spans residues 17 to 1253 (EAPRVRAQHR…PEPCPVYCPK (1237 aa)). A VWFA 1 domain is found at 38 to 211 (DIVFLLDGSS…SILRTLLPLV (174 aa)). 9 Fibronectin type-III domains span residues 234-329 (APRD…TALE), 330-416 (GPEL…TDAS), 417-507 (VEQT…PELP), 510-597 (PVTD…EPET), 600-687 (AVPG…DPLG), 688-775 (PVRT…APEP), 778-866 (RVSR…PPEA), 869-957 (ALGT…SPRV), and 958-1051 (PSIE…CPRG). N-linked (GlcNAc...) asparagine glycosylation is present at asparagine 337. The tract at residues 632–651 (STGSGPESSQTLPPDSTATD) is disordered. Asparagine 786 is a glycosylation site (N-linked (GlcNAc...) asparagine). Residues 1054-1229 (DVVFLPHATQ…PSLDQAVSGL (176 aa)) form the VWFA 2 domain. N-linked (GlcNAc...) asparagine glycosylation occurs at asparagine 1109. 2 short sequence motifs (cell attachment site) span residues 1170–1172 (RGD) and 1334–1336 (RGD). Disordered stretches follow at residues 1239–1941 (TTQP…SVPN), 1963–2782 (WDES…EKGE), and 2837–2872 (SHAEEEERVPPEDDEYSEYSEYSVEEYQDPEAPWDS). Positions 1254–1477 (GQKGEPGEMG…GPRGPPGAIG (224 aa)) are interrupted collagenous region. A triple-helical region region spans residues 1254–2784 (GQKGEPGEMG…GPRGEKGEAA (1531 aa)). Basic and acidic residues predominate over residues 1336 to 1346 (DPGERGPRGPK). Positions 1355-1365 (VIGGEGPGLPG) are enriched in gly residues. Basic and acidic residues predominate over residues 1399–1408 (KGDKGDRGER). Positions 1429-1440 (PGSPGPQGPVGP) are enriched in pro residues. Residues 1574 to 1583 (RGPPGLVLPG) show a composition bias toward low complexity. Basic and acidic residues-rich tracts occupy residues 1630–1642 (RGRDGEVGEKGDE), 1669–1683 (VGEKGDQGDPGEDGR), and 1715–1733 (AREKGEPGDRGQEGPRGPK). Residues 1786-1802 (KPGAAGPSGPNGAAGKA) are compositionally biased toward low complexity. Over residues 1852 to 1877 (EDGRKGEKGDSGASGREGRDGPKGER) the composition is skewed to basic and acidic residues. A compositionally biased stretch (pro residues) spans 1886–1897 (QGPPGLPGPVGP). Gly residues predominate over residues 1898-1911 (PGQGFPGVPGGTGP). Over residues 1974-1984 (PERRRGPKGDS) the composition is skewed to basic and acidic residues. Residues 2008–2010 (RGD) carry the Cell attachment site motif. 4-hydroxyproline occurs at positions 2036 and 2039. Gly residues predominate over residues 2046–2055 (GRAGGVGEAG). The segment covering 2056–2074 (RPGERGERGEKGERGEQGR) has biased composition (basic and acidic residues). The span at 2078–2092 (PGLPGTPGPPGPPGP) shows a compositional bias: pro residues. 4-hydroxyproline occurs at positions 2084, 2087, and 2090. Residues 2127 to 2143 (PKGDRGVPGIKGDRGEP) are compositionally biased toward basic and acidic residues. A 4-hydroxyproline mark is found at proline 2167, proline 2176, proline 2185, and proline 2188. Composition is skewed to low complexity over residues 2191–2206 (PGLAGPAGPQGPSGLK) and 2235–2250 (SGLVGPQGSPGLPGQV). Residues 2328–2346 (AKGDRGLPGPRGEKGEAGR) are compositionally biased toward basic and acidic residues. Over residues 2387-2406 (VKGDLGLPGLPGAPGVVGFP) the composition is skewed to low complexity. A compositionally biased stretch (pro residues) spans 2438 to 2448 (PLGPPGPPGSV). Basic and acidic residues-rich tracts occupy residues 2471–2486 (RGERGEPGIRGEDGRP) and 2534–2570 (AKGDMGERGPRGLDGDKGPRGDNGDPGDKGSKGEPGD). Positions 2553–2555 (RGD) match the Cell attachment site motif. Low complexity predominate over residues 2573 to 2601 (SAGLPGLRGLLGPQGQPGAAGIPGDPGSP). 5-hydroxylysine; alternate occurs at positions 2625 and 2631. 2 O-linked (Gal...) hydroxylysine; alternate glycosylation sites follow: lysine 2625 and lysine 2631. 3 positions are modified to 4-hydroxyproline: proline 2664, proline 2667, and proline 2673. The span at 2704-2713 (GTPGIGGFPG) shows a compositional bias: gly residues. Over residues 2749–2762 (GERVVGAPGVPGAP) the composition is skewed to low complexity. The interval 2785 to 2944 (LTEDDIRGFV…QSQGTGTAQD (160 aa)) is nonhelical region (NC2). The span at 2837–2847 (SHAEEEERVPP) shows a compositional bias: basic and acidic residues. The segment covering 2848 to 2872 (EDDEYSEYSEYSVEEYQDPEAPWDS) has biased composition (acidic residues). The region spanning 2872–2944 (SDDPCSLPLD…QSQGTGTAQD (73 aa)) is the BPTI/Kunitz inhibitor domain. Intrachain disulfides connect cysteine 2876–cysteine 2929, cysteine 2885–cysteine 2912, and cysteine 2904–cysteine 2925.

Homotrimer. Interacts with MIA3/TANGO1; facilitating its loading into transport carriers and subsequent secretion. Post-translationally, prolines at the third position of the tripeptide repeating unit (G-X-Y) are hydroxylated in some or all of the chains.

The protein localises to the secreted. The protein resides in the extracellular space. It localises to the extracellular matrix. It is found in the basement membrane. Functionally, stratified squamous epithelial basement membrane protein that forms anchoring fibrils which may contribute to epithelial basement membrane organization and adherence by interacting with extracellular matrix (ECM) proteins such as type IV collagen. This chain is Collagen alpha-1(VII) chain (COL7A1), found in Homo sapiens (Human).